We begin with the raw amino-acid sequence, 1871 residues long: Girdin (1871 aa).

The region spanning 12–132 is the Calponin-homology (CH) domain; the sequence is QFMTSPLVTW…KLLLLLLGCA (121 aa). A coiled-coil region spans residues 196 to 425; the sequence is HLKRLIDERD…EMAQKQSMDE (230 aa). A phosphoserine mark is found at S233, S237, and S449. A coiled-coil region spans residues 458–1385; it reads TSSRLLKLEM…KIMDQYKFYD (928 aa). Disordered regions lie at residues 816-842 and 1010-1035; these read ENKS…KRLR and RQDE…RESQ. The residue at position 1020 (S1020) is a Phosphoserine. Positions 1026-1035 are enriched in basic and acidic residues; sequence EDNKWERESQ. Position 1387 is a phosphoserine (S1387). Positions 1390-1408 are phosphoinositide-binding; sequence RRRGNWITLKMRKLIKSKK. The span at 1407 to 1416 shows a compositional bias: basic and acidic residues; the sequence is KKDINRERQK. 2 disordered regions span residues 1407-1459 and 1559-1601; these read KKDI…LGTK and TTSF…SNNN. Residue S1417 is modified to Phosphoserine; by PKB/AKT1. Polar residues-rich tracts occupy residues 1417 to 1430, 1445 to 1459, and 1559 to 1578; these read SLTL…SSEG, VGSN…LGTK, and TTSF…STGS. Phosphothreonine is present on T1421. The short motif at 1672-1702 is the GBA element; that stretch reads KTGSPGSEVVTLQQFLEESNKLTSVQIKSSS. A Phosphothreonine modification is found at T1673. At S1675 the chain carries Phosphoserine. S1690 is subject to Phosphoserine; by PKC/PRKCQ. Residues 1713 to 1823 form an SH2-like; required for interaction with growth factor receptors region; it reads SLSVSSDFLG…GTTRRTSIHD (111 aa). S1717 is subject to Phosphoserine. A disordered region spans residues 1736–1871; the sequence is SGKTPGDFYD…KSRSREQQSS (136 aa). The segment covering 1743 to 1763 has biased composition (basic and acidic residues); it reads FYDRRTTKPEFLRPGPRKTED. Phosphotyrosine occurs at positions 1765 and 1799. Polar residues-rich tracts occupy residues 1787 to 1799 and 1807 to 1818; these read SSLS…SNPY and SVISTAEGTTRR. S1820 and S1837 each carry phosphoserine. Basic and acidic residues predominate over residues 1820-1830; that stretch reads SIHDFLTKDSR. Positions 1838 to 1851 are enriched in low complexity; sequence PPAAADSNTTAASN. Over residues 1854 to 1871 the composition is skewed to basic and acidic residues; it reads KVQESRNSKSRSREQQSS.

Belongs to the CCDC88 family. As to quaternary structure, homodimer. Interacts (via GBA motif) with guanine nucleotide-binding protein G(i) alpha subunits GNAI1, GNAI2 and GNAI3. Also interacts (via GNA motif) with guanine nucleotide-binding protein G(s) alpha subunit GNAS. Interaction with G(i) alpha subunits occurs before interaction with GNAS and is regulated by phosphorylation; phosphorylation at Ser-1675 enhances binding to G(i) alpha subunits while phosphorylation at Ser-1690 abolishes G(i) alpha subunit binding, promoting binding to GNAS. Interacts (via C-terminal SH2-like region) with growth factor receptors EGFR, INSR and KDR/VEGFR2 (via their autophosphorylated cytoplasmic tails). Forms a complex with EGFR and GNAI3 which leads to enhanced EGFR signaling and triggering of cell migration; ligand stimulation is required for recruitment of GNAI3 to the complex. Interacts (tyrosine-phosphorylated form) with phosphatidylinositol 3-kinase (PI3K) regulatory subunit PIK3R1/p85a (via SH2 domains); the interaction enables recruitment of PIK3R1 to the EGFR receptor, enhancing PI3K activity and cell migration. Interacts with serine/threonine-protein kinase PRKCQ; the interaction leads to phosphorylation of CCDC88A and inhibition of its guanine nucleotide exchange factor activity. Interacts (via C-terminus) with DISC1; the interaction is direct. Interacts with AKT proteins; the interaction is inhibited in the presence of DISC1. Interacts with AKT1/PKB (via C-terminus). The non-phosphorylated form interacts with phosphatidylinositol 4-phosphate [PI(4)P] and weakly with phosphatidylinositol 3-phosphate [PI(3)P]. Interacts with microtubules. Interacts with actin. Phosphorylation is induced by epidermal growth factor (EGF) in a phosphoinositide 3-kinase (PI3K)-dependent manner. Phosphorylation by AKT1/PKB is necessary for delocalization from the cell membrane and for cell migration. Phosphorylated on tyrosine residues which promotes binding to phosphatidylinositol 3-kinase (PI3K) regulatory subunit PIK3R1/p85a and enhances PI3K activity. Tyrosine-phosphorylated by both receptor and non-receptor tyrosine kinases in vitro. Tyrosine phosphorylation is required for AKT1-dependent phosphorylation of Ser-1417. Phosphorylation at Ser-1690 by PRKCQ disrupts interaction with GNAI3 and inhibits guanine nucleotide exchange factor activity. As to expression, expressed ubiquitously.

It is found in the cell membrane. The protein resides in the cytoplasm. Its subcellular location is the cytosol. The protein localises to the cytoplasmic vesicle. It localises to the cell projection. It is found in the lamellipodium. The protein resides in the cytoskeleton. Its subcellular location is the cilium basal body. The protein localises to the microtubule organizing center. It localises to the centrosome. It is found in the centriole. Its function is as follows. Bifunctional modulator of guanine nucleotide-binding proteins (G proteins). Acts as a non-receptor guanine nucleotide exchange factor which binds to and activates guanine nucleotide-binding protein G(i) alpha subunits. Also acts as a guanine nucleotide dissociation inhibitor for guanine nucleotide-binding protein G(s) subunit alpha GNAS. Essential for cell migration. Interacts in complex with G(i) alpha subunits with the EGFR receptor, retaining EGFR at the cell membrane following ligand stimulation and promoting EGFR signaling which triggers cell migration. Binding to Gi-alpha subunits displaces the beta and gamma subunits from the heterotrimeric G-protein complex which enhances phosphoinositide 3-kinase (PI3K)-dependent phosphorylation and kinase activity of AKT1/PKB. Phosphorylation of AKT1/PKB induces the phosphorylation of downstream effectors GSK3 and FOXO1/FKHR, and regulates DNA replication and cell proliferation. Binds in its tyrosine-phosphorylated form to the phosphatidylinositol 3-kinase (PI3K) regulatory subunit PIK3R1 which enables recruitment of PIK3R1 to the EGFR receptor, enhancing PI3K activity and cell migration. Plays a role as a key modulator of the AKT-mTOR signaling pathway, controlling the tempo of the process of newborn neuron integration during adult neurogenesis, including correct neuron positioning, dendritic development and synapse formation. Inhibition of G(s) subunit alpha GNAS leads to reduced cellular levels of cAMP and suppression of cell proliferation. Essential for the integrity of the actin cytoskeleton. Required for formation of actin stress fibers and lamellipodia. May be involved in membrane sorting in the early endosome. Plays a role in ciliogenesis and cilium morphology and positioning and this may partly be through regulation of the localization of scaffolding protein CROCC/Rootletin. The polypeptide is Girdin (CCDC88A) (Homo sapiens (Human)).